The primary structure comprises 406 residues: MAKGEFVRTKPHVNVGTIGHVDHGKTTLTAALTYVAAAENPNVEVKDYGDIDKAPEERARGITINTAHVEYETAKRHYSHVDCPGHADYIKNMITGAAQMDGAILVVSAADGPMPQTREHILLARQVGVPYIVVFMNKVDMVDDPELLDLVEMEVRDLLNQYEFPGDEVPVIRGSALLALEQMHRNPKTRRGENEWVDKIWELLDAIDEYIPTPVRDVDKPFLMPVEDVFTITGRGTVATGRIERGKVKVGDEVEIVGLAPETRRTVVTGVEMHRKTLQEGIAGDNVGVLLRGVSREEVERGQVLAKPGSITPHTKFEASVYVLKKEEGGRHTGFFSGYRPQFYFRTTDVTGVVQLPPGVEMVMPGDNVTFTVELIKPVALEEGLRFAIREGGRTVGAGVVTKILE.

One can recognise a tr-type G domain in the interval 10 to 215; that stretch reads KPHVNVGTIG…AIDEYIPTPV (206 aa). The segment at 19–26 is G1; sequence GHVDHGKT. 19-26 contributes to the GTP binding site; it reads GHVDHGKT. Position 26 (T26) interacts with Mg(2+). Positions 61–65 are G2; that stretch reads GITIN. Residues 82–85 are G3; that stretch reads DCPG. GTP-binding positions include 82–86 and 137–140; these read DCPGH and NKVD. The G4 stretch occupies residues 137–140; that stretch reads NKVD. The interval 175–177 is G5; that stretch reads SAL. Phosphothreonine is present on T395.

This sequence belongs to the TRAFAC class translation factor GTPase superfamily. Classic translation factor GTPase family. EF-Tu/EF-1A subfamily. As to quaternary structure, monomer. Binds to the 70S ribosome, contacts tmRNA during trans-translation. Post-translationally, phosphorylated on a threonine.

The protein resides in the cytoplasm. It catalyses the reaction GTP + H2O = GDP + phosphate + H(+). GTP hydrolase that promotes the GTP-dependent binding of aminoacyl-tRNA to the A-site of ribosomes during protein biosynthesis. In terms of biological role, EF-Tu-GDP binds to the acceptor arm of tmRNA by interacting with its acceptor arm, suggesting that GTP hydrolysis by EF-Tu is essential for tmRNA function. Its function is as follows. Protects glycyl-tRNA(Gly) from hydrolysis by E.coli D-aminoacyl-tRNA deacylase (dtd). This is Elongation factor Tu-A from Thermus thermophilus (strain ATCC 27634 / DSM 579 / HB8).